Here is a 159-residue protein sequence, read N- to C-terminus: V-type proton ATPase 16 kDa proteolipid subunit c (159 aa).

The Lumenal segment spans residues 1 to 11 (MSEEGSPMYSP). The helical transmembrane segment at 12–32 (FFGVMGAASAMVFSALGAAYG) threads the bilayer. At 33–54 (TAKSGVGISAMSVMRPELIMKC) the chain is on the cytoplasmic side. Residues 55–75 (IIPVVMAGIIAIYGLVVAVLI) form a helical membrane-spanning segment. At 76–93 (AGKLDEAPTYTLYQGFVH) the chain is on the lumenal side. A helical membrane pass occupies residues 94 to 114 (MGAGLSVGLSGLAAGFAIGIV). The Cytoplasmic segment spans residues 115–132 (GDAGVRGTAQQPRLYVGM). A helical transmembrane segment spans residues 133-153 (ILILIFAEVLGLYGLIVAIFL). Residues 154–159 (YTKTSS) are Lumenal-facing.

Belongs to the V-ATPase proteolipid subunit family. V-ATPase is a heteromultimeric enzyme made up of two complexes: the ATP-hydrolytic V1 complex and the proton translocation V0 complex. The V1 complex consists of three catalytic AB heterodimers that form a heterohexamer, three peripheral stalks each consisting of EG heterodimers, one central rotor including subunits D and F, and the regulatory subunits C and H. The proton translocation complex V0 consists of the proton transport subunit a, a ring of proteolipid subunits c9c'', rotary subunit d, subunits e and f, and two accessory subunits.

The protein localises to the vacuole membrane. Functionally, proton-conducting pore forming subunit of the V0 complex of vacuolar(H+)-ATPase (V-ATPase), a multisubunit enzyme composed of a peripheral complex (V1) that hydrolyzes ATP and a membrane integral complex (V0) that translocates protons. V-ATPase is responsible for acidifying and maintaining the pH of intracellular compartments and in some cell types, is targeted to the plasma membrane, where it is responsible for acidifying the extracellular environment. This is V-type proton ATPase 16 kDa proteolipid subunit c from Nephrops norvegicus (Norway lobster).